The chain runs to 358 residues: Tetraacyldisaccharide 4'-kinase (358 aa).

71–78 contributes to the ATP binding site; it reads IAGGAGKT.

The protein belongs to the LpxK family.

It carries out the reaction a lipid A disaccharide + ATP = a lipid IVA + ADP + H(+). It functions in the pathway glycolipid biosynthesis; lipid IV(A) biosynthesis; lipid IV(A) from (3R)-3-hydroxytetradecanoyl-[acyl-carrier-protein] and UDP-N-acetyl-alpha-D-glucosamine: step 6/6. Functionally, transfers the gamma-phosphate of ATP to the 4'-position of a tetraacyldisaccharide 1-phosphate intermediate (termed DS-1-P) to form tetraacyldisaccharide 1,4'-bis-phosphate (lipid IVA). The protein is Tetraacyldisaccharide 4'-kinase of Methylibium petroleiphilum (strain ATCC BAA-1232 / LMG 22953 / PM1).